The primary structure comprises 545 residues: Sulfite oxidase, mitochondrial (545 aa).

Residues 1–79 (MLLLHRAVVL…YQDHRCRAAQ (79 aa)) constitute a mitochondrion transit peptide. One can recognise a Cytochrome b5 heme-binding domain in the interval 82–161 (TRIYTKEEVS…LAQYKVGELN (80 aa)). His118 contributes to the heme b binding site. Position 123 is a phosphoserine (Ser123). Residues His143, Gln145, and His147 each coordinate heme b. The segment at 165 to 174 (KVAPTVETSD) is hinge. The segment at 175 to 401 (PYADDPVRHP…YSHWQRRDYK (227 aa)) is moco domain. Mo-molybdopterin is bound by residues 215–219 (FTRNH), Cys264, Asp322, His361, Arg366, and 377–379 (HVK). Residues 402–538 (GFSPSVDWDT…RGVLSNAWHR (137 aa)) are homodimerization.

Homodimer. Heme b serves as cofactor. It depends on Mo-molybdopterin as a cofactor.

Its subcellular location is the mitochondrion intermembrane space. The catalysed reaction is sulfite + O2 + H2O = sulfate + H2O2. Its pathway is energy metabolism; sulfur metabolism. Functionally, catalyzes the oxidation of sulfite to sulfate, the terminal reaction in the oxidative degradation of sulfur-containing amino acids. The chain is Sulfite oxidase, mitochondrial (SUOX) from Macaca fascicularis (Crab-eating macaque).